The primary structure comprises 444 residues: Aflatoxin biosynthesis regulatory protein (444 aa).

Residues 1–26 (MVDHISPRASPGPIRSSQTRRARKLR) form a disordered region. The segment at residues 29 to 56 (CTSCASSKVRCTKEKPACARCIERGLAC) is a DNA-binding region (zn(2)-C6 fungal-type). The segment at 64–167 (MGRNPRAPSP…QGLGGDLAGQ (104 aa)) is disordered. The span at 106-116 (TQAHTHAHSHP) shows a compositional bias: basic residues. Residues 120 to 130 (PQSHPQSNQPP) are compositionally biased toward low complexity. A compositionally biased stretch (polar residues) spans 136 to 149 (PNGSSSVSAIFSHQ).

It is found in the nucleus. Its pathway is mycotoxin biosynthesis; aflatoxin biosynthesis. In terms of biological role, involved in the regulation of aflatoxin biosynthesis. May have a role in nitrate assimilation and sclerotial morphogenesis. The chain is Aflatoxin biosynthesis regulatory protein (aflR) from Aspergillus parasiticus.